The chain runs to 600 residues: Probable pectin methyltransferase QUA3 (600 aa).

The Cytoplasmic portion of the chain corresponds to Met-1–Arg-18. A helical; Signal-anchor for type II membrane protein membrane pass occupies residues Leu-19 to Phe-39. Topologically, residues Thr-40–His-600 are lumenal. A glycan (N-linked (GlcNAc...) asparagine) is linked at Asn-283.

This sequence belongs to the methyltransferase superfamily. As to expression, highly expressed and abundant in suspension-cultured cells, but low levels in seedlings.

The protein localises to the golgi apparatus membrane. The protein operates within glycan metabolism; pectin biosynthesis. In terms of biological role, S-adenosyl-L-methionine (SAM)-dependent methyltransferase (MTase) which mediates the methylesterification of the pectin homogalacturonan (HG) and thus regulates cell wall biosynthesis, at least in suspension-cultured cells. This chain is Probable pectin methyltransferase QUA3, found in Arabidopsis thaliana (Mouse-ear cress).